A 220-amino-acid polypeptide reads, in one-letter code: Deoxyribose-phosphate aldolase (220 aa).

The active-site Proton donor/acceptor is the Asp89. The active-site Schiff-base intermediate with acetaldehyde is the Lys151. Residue Lys180 is the Proton donor/acceptor of the active site.

Belongs to the DeoC/FbaB aldolase family. DeoC type 1 subfamily.

The protein localises to the cytoplasm. The catalysed reaction is 2-deoxy-D-ribose 5-phosphate = D-glyceraldehyde 3-phosphate + acetaldehyde. It participates in carbohydrate degradation; 2-deoxy-D-ribose 1-phosphate degradation; D-glyceraldehyde 3-phosphate and acetaldehyde from 2-deoxy-alpha-D-ribose 1-phosphate: step 2/2. Catalyzes a reversible aldol reaction between acetaldehyde and D-glyceraldehyde 3-phosphate to generate 2-deoxy-D-ribose 5-phosphate. This Streptococcus pneumoniae serotype 19F (strain G54) protein is Deoxyribose-phosphate aldolase.